The chain runs to 602 residues: Translation factor GUF1 homolog, organellar chromatophore (602 aa).

A tr-type G domain is found at 7–189 (SRIRNFCIIA…AIVERIPPPV (183 aa)). Residues 16-23 (AHIDHGKS), 82-86 (DTPGH), and 136-139 (NKID) contribute to the GTP site.

The protein belongs to the TRAFAC class translation factor GTPase superfamily. Classic translation factor GTPase family. LepA subfamily.

It localises to the plastid. Its subcellular location is the organellar chromatophore. The catalysed reaction is GTP + H2O = GDP + phosphate + H(+). Promotes protein synthesis. May act as a fidelity factor of the translation reaction, by catalyzing a one-codon backward translocation of tRNAs on improperly translocated ribosomes. This Paulinella chromatophora protein is Translation factor GUF1 homolog, organellar chromatophore.